A 106-amino-acid chain; its full sequence is Small ribosomal subunit protein uS10 (106 aa).

This sequence belongs to the universal ribosomal protein uS10 family. Part of the 30S ribosomal subunit.

Functionally, involved in the binding of tRNA to the ribosomes. The sequence is that of Small ribosomal subunit protein uS10 from Parasynechococcus marenigrum (strain WH8102).